Here is a 358-residue protein sequence, read N- to C-terminus: Heterogeneous nuclear ribonucleoprotein A2 homolog 2 (358 aa).

RRM domains follow at residues 9 to 92 (RKLF…ESAK) and 100 to 179 (KKLF…LSKQ). 2 disordered regions span residues 182-217 (QDVQ…FRGG) and 333-358 (YGGG…RNRY). A compositionally biased stretch (gly residues) spans 193–217 (GNFGFGDSRGGGNFGSGPGGNFRGG). The segment at 309–352 (QQSSSYGPMKSGGNFGGNRSMGGPYGGGNYGPGNGSGASGGGGY) is nuclear targeting sequence.

The protein localises to the nucleus. Functionally, forms complexes (ribonucleosomes) with at least 20 other different hnRNP and heterogeneous nuclear RNA in the nucleus. The sequence is that of Heterogeneous nuclear ribonucleoprotein A2 homolog 2 from Xenopus laevis (African clawed frog).